Here is a 286-residue protein sequence, read N- to C-terminus: Nucleotide-binding protein Sfum_2066 (286 aa).

8-15 (GLSGSGKS) is an ATP binding site. 59-62 (DIRE) serves as a coordination point for GTP.

This sequence belongs to the RapZ-like family.

In terms of biological role, displays ATPase and GTPase activities. The polypeptide is Nucleotide-binding protein Sfum_2066 (Syntrophobacter fumaroxidans (strain DSM 10017 / MPOB)).